Reading from the N-terminus, the 179-residue chain is Large ribosomal subunit protein uL6c (179 aa).

Belongs to the universal ribosomal protein uL6 family. As to quaternary structure, part of the 50S ribosomal subunit.

It localises to the plastid. The protein resides in the cyanelle. Binds 23S rRNA. The polypeptide is Large ribosomal subunit protein uL6c (rpl6) (Cyanophora paradoxa).